The sequence spans 316 residues: Malate dehydrogenase (316 aa).

Residues 12 to 17 (GAGNIG) and Asp-36 contribute to the NAD(+) site. The substrate site is built by Arg-85 and Arg-91. NAD(+) is bound by residues Asn-98 and 121 to 123 (VTN). Substrate contacts are provided by Asn-123 and Arg-154. The active-site Proton acceptor is His-178.

It belongs to the LDH/MDH superfamily. MDH type 3 family.

It carries out the reaction (S)-malate + NAD(+) = oxaloacetate + NADH + H(+). Catalyzes the reversible oxidation of malate to oxaloacetate. This is Malate dehydrogenase from Wolbachia sp. subsp. Brugia malayi (strain TRS).